Consider the following 444-residue polypeptide: Glutamate--tRNA ligase 1 (444 aa).

Positions 7 to 17 match the 'HIGH' region motif; that stretch reads PSPTGYLHVGN. A 'KMSKS' region motif is present at residues 238–242; the sequence is KISKR. K241 contacts ATP.

Belongs to the class-I aminoacyl-tRNA synthetase family. Glutamate--tRNA ligase type 1 subfamily. As to quaternary structure, monomer.

It is found in the cytoplasm. It carries out the reaction tRNA(Glu) + L-glutamate + ATP = L-glutamyl-tRNA(Glu) + AMP + diphosphate. Its function is as follows. Catalyzes the attachment of glutamate to tRNA(Glu) in a two-step reaction: glutamate is first activated by ATP to form Glu-AMP and then transferred to the acceptor end of tRNA(Glu). The chain is Glutamate--tRNA ligase 1 from Wolbachia pipientis subsp. Culex pipiens (strain wPip).